The sequence spans 379 residues: UDP-N-acetylglucosamine--N-acetylmuramyl-(pentapeptide) pyrophosphoryl-undecaprenol N-acetylglucosamine transferase (379 aa).

Residues 19 to 21 (TGG), N133, R174, S207, I261, and Q306 contribute to the UDP-N-acetyl-alpha-D-glucosamine site.

Belongs to the glycosyltransferase 28 family. MurG subfamily.

It is found in the cell inner membrane. The catalysed reaction is di-trans,octa-cis-undecaprenyl diphospho-N-acetyl-alpha-D-muramoyl-L-alanyl-D-glutamyl-meso-2,6-diaminopimeloyl-D-alanyl-D-alanine + UDP-N-acetyl-alpha-D-glucosamine = di-trans,octa-cis-undecaprenyl diphospho-[N-acetyl-alpha-D-glucosaminyl-(1-&gt;4)]-N-acetyl-alpha-D-muramoyl-L-alanyl-D-glutamyl-meso-2,6-diaminopimeloyl-D-alanyl-D-alanine + UDP + H(+). The protein operates within cell wall biogenesis; peptidoglycan biosynthesis. Functionally, cell wall formation. Catalyzes the transfer of a GlcNAc subunit on undecaprenyl-pyrophosphoryl-MurNAc-pentapeptide (lipid intermediate I) to form undecaprenyl-pyrophosphoryl-MurNAc-(pentapeptide)GlcNAc (lipid intermediate II). In Porphyromonas gingivalis (strain ATCC 33277 / DSM 20709 / CIP 103683 / JCM 12257 / NCTC 11834 / 2561), this protein is UDP-N-acetylglucosamine--N-acetylmuramyl-(pentapeptide) pyrophosphoryl-undecaprenol N-acetylglucosamine transferase.